A 263-amino-acid polypeptide reads, in one-letter code: HTH-type transcriptional repressor NanR (263 aa).

The interval 1-24 (MSPMNAFDSQTEDSSPAIGRNLRS) is disordered. The region spanning 30-98 (KKLSEMVEEE…NGERARVSRP (69 aa)) is the HTH gntR-type domain. Positions 58–77 (ERELMAFFNVGRPSVREALA) form a DNA-binding region, H-T-H motif.

This sequence belongs to the NanR family.

In terms of biological role, transcriptional repressor that controls expression of the genes required for the catabolism of sialic acids. The polypeptide is HTH-type transcriptional repressor NanR (Escherichia coli O127:H6 (strain E2348/69 / EPEC)).